A 757-amino-acid chain; its full sequence is Endosialin (757 aa).

An N-terminal signal peptide occupies residues 1-17 (MLLRLLLAWAAAGPTLG). Topologically, residues 18 to 687 (QDPWAAEPRA…EHSQRDDRWL (670 aa)) are extracellular. Residues 30–156 (GPSSCYALFP…CTLAVDGYLC (127 aa)) enclose the C-type lectin domain. Residue Thr-60 is glycosylated (O-linked (GalNAc...) threonine). A disulfide bridge links Cys-131 with Cys-147. The 71-residue stretch at 162-232 (GACPALQDEA…WSRAGPLCLG (71 aa)) folds into the Sushi domain. Residues 312–351 (DTDECQIAGVCQQMCVNYVGGFECYCSEGHELEADGISCS) form the EGF-like; calcium-binding domain. Intrachain disulfides connect Cys-316–Cys-326, Cys-322–Cys-335, and Cys-337–Cys-350. O-linked (GalNAc...) threonine glycosylation is found at Thr-401, Thr-428, Thr-448, Thr-456, Thr-459, Thr-472, Thr-519, Thr-541, Thr-543, Thr-544, Thr-545, Thr-587, Thr-593, Thr-594, and Thr-595. 2 O-linked (GalNAc...) serine glycosylation sites follow: Ser-598 and Ser-601. O-linked (GalNAc...) threonine glycosylation is found at Thr-612 and Thr-619. The span at 618-627 (PTLLPSQSPT) shows a compositional bias: low complexity. Positions 618–662 (PTLLPSQSPTNQTSPISPTHPHSKAPQIPREDGPSPKLALWLPSP) are disordered. O-linked (GalNAc...) serine glycans are attached at residues Ser-623 and Ser-625. Thr-627 and Thr-630 each carry an O-linked (GalNAc...) threonine glycan. An O-linked (GalNAc...) serine glycan is attached at Ser-631. Thr-636 carries O-linked (GalNAc...) threonine glycosylation. O-linked (GalNAc...) serine glycosylation occurs at Ser-640. Residues 688–708 (LVALLVPTCVFLVVLLALGIV) traverse the membrane as a helical segment. Over 709–757 (YCTRCGPHAPNKRITDCYRWVIHAGSKSPTEPMPPRGSLTGVQTCRTSV) the chain is Cytoplasmic. The tract at residues 737–757 (PTEPMPPRGSLTGVQTCRTSV) is disordered. Ser-746 carries the phosphoserine modification. Residues 748 to 757 (TGVQTCRTSV) show a composition bias toward polar residues.

Interacts with PDGFRA; this interaction promotes PDGF receptor signaling pathway. Interacts with integrin beta-1/ITGB1. Interacts with insulin receptor/INSR; this interaction diminishes INSR autophosphorylation. O-glycosylated with sialylated oligosaccharides. In terms of processing, may be N-glycosylated. In terms of tissue distribution, expressed in tumor endothelial cells but absent or barely detectable in normal endothelial cells. Expressed in metastatic lesions of the liver and during angiogenesis of corpus luteum formation and wound healing. Expressed in vascular endothelial cells of malignant tumors but not in normal blood vessels. Expressed in stromal fibroblasts. Strongly expressed in pericytes. Expressed on stromal cells and cells with lymphoid morphology such a T-cells.

The protein localises to the membrane. Functionally, cell surface glycoprotein involved in various biological processes including angiogenesis, immune response modulation, and tissue remodeling and repair. Participates in pericyte proliferation through positive modulation of the PDGF receptor signaling pathway. Acts as a scaffold for factor X, triggering allosteric changes and the spatial re-alignment of factor X with the TF-factor VIIa complex, thereby enhancing coagulation activation. Modulates the insulin signaling pathway by interacting with insulin receptor/INSR and by diminishing its capacity to be autophosphorylated in response to insulin. Also regulates LPS-induced inflammatory response in macrophages by favoring the production of proinflammatory cytokines. In human, negatively regulates T-cell proliferation compared with stromal cells where it increases proliferation. The protein is Endosialin (CD248) of Homo sapiens (Human).